The following is a 98-amino-acid chain: NADH-ubiquinone oxidoreductase chain 4L (98 aa).

Transmembrane regions (helical) follow at residues 1–21 (MSMVYANIFMAFVVSLMGMLV), 29–49 (SLLCLEGMMLSLFVMMSVTIL), and 61–81 (IILLVFAACEAALGLSLLVMV).

Belongs to the complex I subunit 4L family. As to quaternary structure, core subunit of respiratory chain NADH dehydrogenase (Complex I) which is composed of 45 different subunits.

Its subcellular location is the mitochondrion inner membrane. It catalyses the reaction a ubiquinone + NADH + 5 H(+)(in) = a ubiquinol + NAD(+) + 4 H(+)(out). In terms of biological role, core subunit of the mitochondrial membrane respiratory chain NADH dehydrogenase (Complex I) which catalyzes electron transfer from NADH through the respiratory chain, using ubiquinone as an electron acceptor. Part of the enzyme membrane arm which is embedded in the lipid bilayer and involved in proton translocation. The chain is NADH-ubiquinone oxidoreductase chain 4L (MT-ND4L) from Odobenus rosmarus rosmarus (Atlantic walrus).